The following is a 158-amino-acid chain: Ribonuclease HI (158 aa).

Positions 3–144 (ELKLIHIFTD…CDQLARAAAE (142 aa)) constitute an RNase H type-1 domain. The Mg(2+) site is built by aspartate 12, glutamate 50, aspartate 72, and aspartate 136.

The protein belongs to the RNase H family. In terms of assembly, monomer. Mg(2+) serves as cofactor.

The protein localises to the cytoplasm. The enzyme catalyses Endonucleolytic cleavage to 5'-phosphomonoester.. Endonuclease that specifically degrades the RNA of RNA-DNA hybrids. The protein is Ribonuclease HI of Shewanella oneidensis (strain ATCC 700550 / JCM 31522 / CIP 106686 / LMG 19005 / NCIMB 14063 / MR-1).